The following is a 416-amino-acid chain: Gasdermin-B (416 aa).

The segment at 1–280 (MFSVFEEITR…EKRKDVLNSL (280 aa)) is triggers pyroptosis. 2 beta stranded membrane-spanning segments follow: residues 83-101 (EFQILDNVDSTGELIVRLP) and 102-125 (KEITISGSFQGFHHQKIKISENRI). (Microbial infection) Glycyl lysine isopeptide (Lys-Gly) (interchain with G-Cter in ubiquitin) cross-links involve residues Lys-166, Lys-177, Lys-190, and Lys-192. The next 2 membrane-spanning stretches (beta stranded) occupy residues 167 to 183 (EETLKSDRQYKFWSQIS) and 184 to 198 (QGHLSYKHKGQREVT). The tract at residues 229 to 250 (KSFPEEKDGASSCLGKSLGSED) is disordered. Residues 248-276 (SEDSRNMKEKLEDMESVLKDLTEEKRKDV) are a coiled coil. Met-308 participates in a covalent cross-link: (Microbial infection) Glycyl lysine isopeptide (Lys-Gly) (interchain with G-Cter in ubiquitin).

The protein belongs to the gasdermin family. As to quaternary structure, homooligomer; homooligomeric ring-shaped pore complex containing 24-26 subunits when inserted in the membrane. Cleavage by granzyme A (GZMA) relieves autoinhibition by releasing the N-terminal moiety (Gasdermin-B, N-terminal) that initiates pyroptosis. Not cleaved by other granzymes. Major cleavage site takes places after Lys-244; a minor cleavage site takes place after Lys-229. Cleavage by neutrophil elastase ELANE, inhibits its ability to trigger pyroptosis. Post-translationally, palmitoylated. In terms of processing, (Microbial infection) Ubiquitinated by S.flexneri IpaH7.8, leading to its degradation by the proteasome, thereby preventing its ability to form pores in bacterial-derived membranes. In the gastrointestinal tract, expressed in proliferating cells, including in the basal cell layer of esophagus and in isthmus/neck of stomach.

It is found in the cytoplasm. The protein resides in the cell membrane. Its activity is regulated as follows. The full-length protein before cleavage is inactive: intramolecular interactions between N- and C-terminal domains mediate autoinhibition in the absence of activation signal. The intrinsic pyroptosis-inducing activity is carried by the released N-terminal moiety (Gasdermin-B, N-terminal) following cleavage by granzyme A (GZMA). Precursor of a pore-forming protein that acts as a downstream mediator of granzyme-mediated cell death. This form constitutes the precursor of the pore-forming protein: upon cleavage, the released N-terminal moiety (Gasdermin-B, N-terminal) binds to membranes and forms pores, triggering pyroptosis. Also acts as a regulator of epithelial cell repair independently of programmed cell death: translocates to the plasma membrane and promotes epithelial maintenance and repair by regulating PTK2/FAK-mediated phosphorylation of PDGFA. Its function is as follows. Pore-forming protein produced by cleavage by granzyme A (GZMA), which causes membrane permeabilization and pyroptosis in target cells of cytotoxic T and natural killer (NK) cells. Key downstream mediator of granzyme-mediated cell death: (1) granzyme A (GZMA), delivered to target cells from cytotoxic T- and NK-cells, (2) specifically cleaves Gasdermin-B to generate this form. After cleavage, moves to the plasma membrane, homooligomerizes within the membrane and forms pores of 10-15 nanometers (nm) of inner diameter, triggering pyroptosis. The different isoforms recognize and bind different phospholipids on membranes, promoting cell death of different target cells. In terms of biological role, precursor of a pore-forming protein that acts as a downstream mediator of granzyme-mediated cell death and mediates pyroptosis. Following cleavage and activation by granzyme A (GZMA), the N-terminal part binds to membrane inner leaflet lipids, homooligomerizes within the human plasma membrane and forms pores of 10-15 nanometers (nm) of inner diameter, triggering pyroptosis. Recognizes and binds membrane inner leaflet lipids of human cells, such as phosphatidylinositol 4-phosphate, phosphatidylinositol 5-phosphate, bisphosphorylated phosphatidylinositols, such as phosphatidylinositol (4,5)-bisphosphate, and more weakly to phosphatidic acid. Also binds sufatide, a component of the apical membrane of epithelial cells. Functionally, precursor of a pore-forming protein that acts as a downstream mediator of granzyme-mediated cell death and mediates pyroptosis of human cells. Following cleavage and activation by granzyme A (GZMA), the N-terminal part binds to membrane inner leaflet lipids, homooligomerizes within the human plasma membrane and forms pores of 10-15 nanometers (nm) of inner diameter, triggering pyroptosis. Precursor of a pore-forming protein that acts as a downstream mediator of granzyme-mediated cell death and specifically mediates cell death of Gram-negative bacteria in response to infection. Following cleavage and activation by granzyme A (GZMA), the N-terminal part recognizes and binds phospholipids found on Gram-negative bacterial membranes, such as lipid A and cariolipin, homooligomerizes within the bacterial membranes and forms pores, triggering pyroptosis followed by cell death. In contrast to isoform 4, does not bind to membrane inner leaflet lipids of host human cell, such as phosphatidylinositol 4-phosphate, phosphatidylinositol 5-phosphate, bisphosphorylated phosphatidylinositols, such as phosphatidylinositol (4,5)-bisphosphate. Its function is as follows. Not able to trigger pyroptosis. This is Gasdermin-B from Homo sapiens (Human).